A 545-amino-acid chain; its full sequence is Phenylalanine--tRNA ligase beta subunit (545 aa).

The B5 domain maps to 268–343; the sequence is FLHKIQNVRE…MSIGYNNLEP (76 aa). Mg(2+) contacts are provided by aspartate 321, aspartate 327, glutamate 330, and aspartate 331.

It belongs to the phenylalanyl-tRNA synthetase beta subunit family. Type 2 subfamily. Tetramer of two alpha and two beta subunits. It depends on Mg(2+) as a cofactor.

The protein resides in the cytoplasm. It carries out the reaction tRNA(Phe) + L-phenylalanine + ATP = L-phenylalanyl-tRNA(Phe) + AMP + diphosphate + H(+). The chain is Phenylalanine--tRNA ligase beta subunit from Saccharolobus islandicus (strain L.S.2.15 / Lassen #1) (Sulfolobus islandicus).